A 398-amino-acid chain; its full sequence is Dihydrolipoyllysine-residue succinyltransferase component of 2-oxoglutarate dehydrogenase complex (398 aa).

The Lipoyl-binding domain maps to 2–77 (SIKIIIPSLG…TVGEEVGEIN (76 aa)). N6-lipoyllysine is present on lysine 43. Residues 112–149 (ILAPSVQKLVTENKLDPNNIKGTGRGGRITKYDVLETI) enclose the Peripheral subunit-binding (PSBD) domain. Active-site residues include histidine 369 and aspartate 373.

This sequence belongs to the 2-oxoacid dehydrogenase family. As to quaternary structure, forms a 24-polypeptide structural core with octahedral symmetry. Part of the 2-oxoglutarate dehydrogenase (OGDH) complex composed of E1 (2-oxoglutarate dehydrogenase), E2 (dihydrolipoamide succinyltransferase) and E3 (dihydrolipoamide dehydrogenase); the complex contains multiple copies of the three enzymatic components (E1, E2 and E3). Requires (R)-lipoate as cofactor.

It carries out the reaction N(6)-[(R)-dihydrolipoyl]-L-lysyl-[protein] + succinyl-CoA = N(6)-[(R)-S(8)-succinyldihydrolipoyl]-L-lysyl-[protein] + CoA. It functions in the pathway amino-acid degradation; L-lysine degradation via saccharopine pathway; glutaryl-CoA from L-lysine: step 6/6. Functionally, E2 component of the 2-oxoglutarate dehydrogenase (OGDH) complex which catalyzes the second step in the conversion of 2-oxoglutarate to succinyl-CoA and CO(2). This Rickettsia typhi (strain ATCC VR-144 / Wilmington) protein is Dihydrolipoyllysine-residue succinyltransferase component of 2-oxoglutarate dehydrogenase complex (sucB).